Reading from the N-terminus, the 155-residue chain is V-type proton ATPase 16 kDa proteolipid subunit c (155 aa).

Topologically, residues Met1–Tyr10 are lumenal. The helical transmembrane segment at Ala11 to Gly33 threads the bilayer. Residues Thr34 to Ser55 lie on the Cytoplasmic side of the membrane. Residues Ile56 to Ile76 traverse the membrane as a helical segment. Topologically, residues Ala77 to Gln92 are lumenal. Residues Leu93–Gly114 form a helical membrane-spanning segment. Over Asp115–Met131 the chain is Cytoplasmic. Residues Ile132–Leu152 form a helical membrane-spanning segment. The Lumenal portion of the chain corresponds to Ser153–Lys155.

This sequence belongs to the V-ATPase proteolipid subunit family. In terms of assembly, V-ATPase is a heteromultimeric enzyme made up of two complexes: the ATP-hydrolytic V1 complex and the proton translocation V0 complex. The V1 complex consists of three catalytic AB heterodimers that form a heterohexamer, three peripheral stalks each consisting of EG heterodimers, one central rotor including subunits D and F, and the regulatory subunits C and H. The proton translocation complex V0 consists of the proton transport subunit a, a ring of proteolipid subunits c9c'', rotary subunit d, subunits e and f, and the accessory subunits ATP6AP1/Ac45 and ATP6AP2/PRR. Interacts with the V0 complex V-ATPase subunit a4 ATP6V0A4. Interacts with LASS2. Interacts with RNF182; this interaction leads to ubiquitination and degradation via the proteasome pathway. In terms of processing, ubiquitinated by RNF182, leading to its degradation via the ubiquitin-proteasome pathway.

The protein resides in the cytoplasmic vesicle. Its subcellular location is the clathrin-coated vesicle membrane. The protein localises to the secretory vesicle. It localises to the synaptic vesicle membrane. Functionally, proton-conducting pore forming subunit of the V0 complex of vacuolar(H+)-ATPase (V-ATPase), a multisubunit enzyme composed of a peripheral complex (V1) that hydrolyzes ATP and a membrane integral complex (V0) that translocates protons. V-ATPase is responsible for acidifying and maintaining the pH of intracellular compartments and in some cell types, is targeted to the plasma membrane, where it is responsible for acidifying the extracellular environment. The polypeptide is V-type proton ATPase 16 kDa proteolipid subunit c (ATP6V0C) (Ovis aries (Sheep)).